A 738-amino-acid chain; its full sequence is RNA polymerase II degradation factor 1 (738 aa).

The region spanning alanine 21–valine 63 is the CUE domain. A compositionally biased stretch (basic and acidic residues) spans valine 69–glutamine 84. 3 disordered regions span residues valine 69–glutamine 455, tyrosine 467–asparagine 503, and asparagine 640–asparagine 688. Residues lysine 103–asparagine 121 show a composition bias toward low complexity. Basic and acidic residues predominate over residues histidine 211–isoleucine 220. Residues serine 224–serine 237 show a composition bias toward low complexity. Over residues lysine 256–glutamate 291 the composition is skewed to basic and acidic residues. Residues serine 260, serine 273, and serine 307 each carry the phosphoserine modification. 2 stretches are compositionally biased toward acidic residues: residues glutamate 298–glutamate 328 and glutamine 337–valine 358. Phosphothreonine is present on threonine 338. 2 stretches are compositionally biased toward low complexity: residues valine 380–glutamine 455 and tyrosine 467–glutamine 498. The tract at residues glutamine 500–tyrosine 530 is contains the proteolytic activation cleavage site. Position 646 is a phosphoserine (serine 646). Over residues glutamine 660–asparagine 688 the composition is skewed to low complexity.

This sequence belongs to the DEF1 family. As to quaternary structure, homodimer; may form higher order oligomers. Interacts with the large RNA polymerase II subunit RPO21; the interaction is direct and serves to bridge RPO21 to the Elongin complex in a manner dependent on transcription stress. Interacts with RAD26. Ubiquitinated. Post-translationally, proteolytically cleaved by the proteasome in response to transcription stress; the resulting N-terminal form constitutes the activated nuclear form and the C-terminal portion is degraded.

The protein localises to the cytoplasm. Its subcellular location is the nucleus. The protein resides in the chromosome. It localises to the telomere. Recruits the ubiquitination machinery to RNA polymerase II for polyubiquitination, removal and degradation, when the transcription-coupled repair (TCR) factor RAD26 fails to efficiently displace stalled RNA polymerase II. Also involved in telomere length regulation. Binds DNA. In Saccharomyces cerevisiae (strain JAY291) (Baker's yeast), this protein is RNA polymerase II degradation factor 1 (DEF1).